Here is a 217-residue protein sequence, read N- to C-terminus: MATLTPRQQQIFDLIRNTIRRTGFPPTRAEIAAEFGFSSPNAAEEHLRALARKGVIELTPGASRGIRLKVAHSDSEMPDQFSLPMAGVMQLTLPLVGRVAAGSPILAAEHIDRQYQVDASVFDERPDYLLRVRGLSMRDAGILDGDLLAVRRASEAANGKIVVARLGDDVTVKRLQRRGGHIELIAENPDFTNIIVEPGEEFSLEGIAVGLIRSSGF.

The segment at residues 28–48 (RAEIAAEFGFSSPNAAEEHLR) is a DNA-binding region (H-T-H motif). Catalysis depends on for autocatalytic cleavage activity residues serine 136 and lysine 173.

This sequence belongs to the peptidase S24 family. In terms of assembly, homodimer.

The enzyme catalyses Hydrolysis of Ala-|-Gly bond in repressor LexA.. Its function is as follows. Represses a number of genes involved in the response to DNA damage (SOS response), including recA and lexA. In the presence of single-stranded DNA, RecA interacts with LexA causing an autocatalytic cleavage which disrupts the DNA-binding part of LexA, leading to derepression of the SOS regulon and eventually DNA repair. The polypeptide is LexA repressor (Cupriavidus necator (strain ATCC 17699 / DSM 428 / KCTC 22496 / NCIMB 10442 / H16 / Stanier 337) (Ralstonia eutropha)).